The following is a 33-amino-acid chain: Toxin Bcg III 25.52 (33 aa).

C6 and C28 are joined by a disulfide.

Its subcellular location is the secreted. The protein resides in the nematocyst. The protein is Toxin Bcg III 25.52 of Bunodosoma cangicum (Sea anemone).